The chain runs to 39 residues: Mu-like prophage FluMu protein com (39 aa).

It belongs to the com family.

The sequence is that of Mu-like prophage FluMu protein com from Haemophilus influenzae (strain ATCC 51907 / DSM 11121 / KW20 / Rd).